Reading from the N-terminus, the 155-residue chain is SsrA-binding protein (155 aa).

Residues 132–147 (KRESIKRREQDRDIKR) are compositionally biased toward basic and acidic residues. Residues 132-155 (KRESIKRREQDRDIKRQMKQFNGR) form a disordered region.

Belongs to the SmpB family.

The protein localises to the cytoplasm. Its function is as follows. Required for rescue of stalled ribosomes mediated by trans-translation. Binds to transfer-messenger RNA (tmRNA), required for stable association of tmRNA with ribosomes. tmRNA and SmpB together mimic tRNA shape, replacing the anticodon stem-loop with SmpB. tmRNA is encoded by the ssrA gene; the 2 termini fold to resemble tRNA(Ala) and it encodes a 'tag peptide', a short internal open reading frame. During trans-translation Ala-aminoacylated tmRNA acts like a tRNA, entering the A-site of stalled ribosomes, displacing the stalled mRNA. The ribosome then switches to translate the ORF on the tmRNA; the nascent peptide is terminated with the 'tag peptide' encoded by the tmRNA and targeted for degradation. The ribosome is freed to recommence translation, which seems to be the essential function of trans-translation. This chain is SsrA-binding protein, found in Streptococcus mutans serotype c (strain ATCC 700610 / UA159).